A 284-amino-acid polypeptide reads, in one-letter code: tRNA uridine(34) hydroxylase (284 aa).

A Rhodanese domain is found at 132–226; it reads TGRPVVMLDT…YFEEVGGAHY (95 aa). Cys186 serves as the catalytic Cysteine persulfide intermediate.

It belongs to the TrhO family.

The enzyme catalyses uridine(34) in tRNA + AH2 + O2 = 5-hydroxyuridine(34) in tRNA + A + H2O. In terms of biological role, catalyzes oxygen-dependent 5-hydroxyuridine (ho5U) modification at position 34 in tRNAs. This is tRNA uridine(34) hydroxylase from Burkholderia lata (strain ATCC 17760 / DSM 23089 / LMG 22485 / NCIMB 9086 / R18194 / 383).